The chain runs to 360 residues: Mitogen-activated protein kinase 14 (360 aa).

Ser-2 is subject to N-acetylserine. Position 2 is a phosphoserine (Ser-2). Thr-16 is modified (phosphothreonine). Positions 24–308 (YQNLSPVGSG…AAQALAHAYF (285 aa)) constitute a Protein kinase domain. ATP-binding positions include 30–38 (VGSGAYGSV) and Lys-53. Residue Lys-53 is modified to N6-acetyllysine. Asp-150 serves as the catalytic Proton acceptor. Position 152 is an N6-acetyllysine (Lys-152). Position 180 is a phosphothreonine; by MAP2K3, MAP2K4, MAP2K6 and autocatalysis (Thr-180). The TXY motif lies at 180 to 182 (TGY). Tyr-182 bears the Phosphotyrosine; by MAP2K3, MAP2K4, MAP2K6 and autocatalysis mark. Residue Thr-263 is modified to Phosphothreonine. Tyr-323 bears the Phosphotyrosine; by ZAP70 mark.

It belongs to the protein kinase superfamily. CMGC Ser/Thr protein kinase family. MAP kinase subfamily. As to quaternary structure, component of a signaling complex containing at least AKAP13, PKN1, MAPK14, ZAK and MAP2K3. Within this complex, AKAP13 interacts directly with PKN1, which in turn recruits MAPK14, MAP2K3 and ZAK. Binds to a kinase interaction motif within the protein tyrosine phosphatase, PTPRR. This interaction retains MAPK14 in the cytoplasm and prevents nuclear accumulation. Interacts with SPAG9 and GADD45A. Interacts with CDC25B, CDC25C, DUSP1, DUSP10, DUSP16, NP60, SUPT20H and TAB1. Interacts with casein kinase II subunits CSNK2A1 and CSNK2B. Interacts with PPM1D. Interacts with CDK5RAP3; recruits PPM1D to MAPK14 and may regulate its dephosphorylation. Interacts with DUSP2; this interaction does not lead to catalytic activation of DUSP2 and dephosphrylation of MAPK14. Requires Mg(2+) as cofactor. Dually phosphorylated on Thr-180 and Tyr-182 by the MAP2Ks MAP2K3/MKK3, MAP2K4/MKK4 and MAP2K6/MKK6 in response to inflammatory citokines, environmental stress or growth factors, which activates the enzyme. Dual phosphorylation can also be mediated by TAB1-mediated autophosphorylation. TCR engagement in T-cells also leads to Tyr-323 phosphorylation by ZAP70. Dephosphorylated and inactivated by DUPS1, DUSP10 and DUSP16. PPM1D also mediates dephosphorylation and inactivation of MAPK14. Post-translationally, acetylated at Lys-53 and Lys-152 by KAT2B and EP300. Acetylation at Lys-53 increases the affinity for ATP and enhances kinase activity. Lys-53 and Lys-152 are deacetylated by HDAC3. In terms of processing, ubiquitinated. Ubiquitination leads to degradation by the proteasome pathway.

The protein localises to the cytoplasm. It localises to the nucleus. The catalysed reaction is L-seryl-[protein] + ATP = O-phospho-L-seryl-[protein] + ADP + H(+). It catalyses the reaction L-threonyl-[protein] + ATP = O-phospho-L-threonyl-[protein] + ADP + H(+). Its activity is regulated as follows. Activated by cell stresses such as DNA damage, heat shock, osmotic shock, anisomycin and sodium arsenite, as well as pro-inflammatory stimuli such as bacterial lipopolysaccharide (LPS) and interleukin-1. Activation occurs through dual phosphorylation of Thr-180 and Tyr-182 by either of two dual specificity kinases, MAP2K3/MKK3 or MAP2K6/MKK6, and potentially also MAP2K4/MKK4, as well as by TAB1-mediated autophosphorylation. MAPK14 phosphorylated on both Thr-180 and Tyr-182 is 10-20-fold more active than MAPK14 phosphorylated only on Thr-180, whereas MAPK14 phosphorylated on Tyr-182 alone is inactive. whereas Thr-180 is necessary for catalysis, Tyr-182 may be required for auto-activation and substrate recognition. Phosphorylated at Tyr-323 by ZAP70 in an alternative activation pathway in response to TCR signaling in T-cells. This alternative pathway is inhibited by GADD45A. Inhibited by dual specificity phosphatases, such as DUSP1, DUSP10, and DUSP16. Specifically inhibited by the binding of pyridinyl-imidazole compounds, which are cytokine-suppressive anti-inflammatory drugs (CSAID). SB203580 is an inhibitor of MAPK14. In terms of biological role, serine/threonine kinase which acts as an essential component of the MAP kinase signal transduction pathway. MAPK14 is one of the four p38 MAPKs which play an important role in the cascades of cellular responses evoked by extracellular stimuli such as pro-inflammatory cytokines or physical stress leading to direct activation of transcription factors. Accordingly, p38 MAPKs phosphorylate a broad range of proteins and it has been estimated that they may have approximately 200 to 300 substrates each. Some of the targets are downstream kinases which are activated through phosphorylation and further phosphorylate additional targets. RPS6KA5/MSK1 and RPS6KA4/MSK2 can directly phosphorylate and activate transcription factors such as CREB1, ATF1, the NF-kappa-B isoform RELA/NFKB3, STAT1 and STAT3, but can also phosphorylate histone H3 and the nucleosomal protein HMGN1. RPS6KA5/MSK1 and RPS6KA4/MSK2 play important roles in the rapid induction of immediate-early genes in response to stress or mitogenic stimuli, either by inducing chromatin remodeling or by recruiting the transcription machinery. On the other hand, two other kinase targets, MAPKAPK2/MK2 and MAPKAPK3/MK3, participate in the control of gene expression mostly at the post-transcriptional level, by phosphorylating ZFP36 (tristetraprolin) and ELAVL1, and by regulating EEF2K, which is important for the elongation of mRNA during translation. MKNK1/MNK1 and MKNK2/MNK2, two other kinases activated by p38 MAPKs, regulate protein synthesis by phosphorylating the initiation factor EIF4E2. MAPK14 also interacts with casein kinase II, leading to its activation through autophosphorylation and further phosphorylation of TP53/p53. In the cytoplasm, the p38 MAPK pathway is an important regulator of protein turnover. For example, CFLAR is an inhibitor of TNF-induced apoptosis whose proteasome-mediated degradation is regulated by p38 MAPK phosphorylation. In a similar way, MAPK14 phosphorylates the ubiquitin ligase SIAH2, regulating its activity towards EGLN3. MAPK14 may also inhibit the lysosomal degradation pathway of autophagy by interfering with the intracellular trafficking of the transmembrane protein ATG9. Another function of MAPK14 is to regulate the endocytosis of membrane receptors by different mechanisms that impinge on the small GTPase RAB5A. In addition, clathrin-mediated EGFR internalization induced by inflammatory cytokines and UV irradiation depends on MAPK14-mediated phosphorylation of EGFR itself as well as of RAB5A effectors. Ectodomain shedding of transmembrane proteins is regulated by p38 MAPKs as well. In response to inflammatory stimuli, p38 MAPKs phosphorylate the membrane-associated metalloprotease ADAM17. Such phosphorylation is required for ADAM17-mediated ectodomain shedding of TGF-alpha family ligands, which results in the activation of EGFR signaling and cell proliferation. Another p38 MAPK substrate is FGFR1. FGFR1 can be translocated from the extracellular space into the cytosol and nucleus of target cells, and regulates processes such as rRNA synthesis and cell growth. FGFR1 translocation requires p38 MAPK activation. In the nucleus, many transcription factors are phosphorylated and activated by p38 MAPKs in response to different stimuli. Classical examples include ATF1, ATF2, ATF6, ELK1, PTPRH, DDIT3, TP53/p53 and MEF2C and MEF2A. The p38 MAPKs are emerging as important modulators of gene expression by regulating chromatin modifiers and remodelers. The promoters of several genes involved in the inflammatory response, such as IL6, IL8 and IL12B, display a p38 MAPK-dependent enrichment of histone H3 phosphorylation on 'Ser-10' (H3S10ph) in LPS-stimulated myeloid cells. This phosphorylation enhances the accessibility of the cryptic NF-kappa-B-binding sites marking promoters for increased NF-kappa-B recruitment. Phosphorylates CDC25B and CDC25C which is required for binding to 14-3-3 proteins and leads to initiation of a G2 delay after ultraviolet radiation. Phosphorylates TIAR following DNA damage, releasing TIAR from GADD45A mRNA and preventing mRNA degradation. The p38 MAPKs may also have kinase-independent roles, which are thought to be due to the binding to targets in the absence of phosphorylation. Protein O-Glc-N-acylation catalyzed by the OGT is regulated by MAPK14, and, although OGT does not seem to be phosphorylated by MAPK14, their interaction increases upon MAPK14 activation induced by glucose deprivation. This interaction may regulate OGT activity by recruiting it to specific targets such as neurofilament H, stimulating its O-Glc-N-acylation. Required in mid-fetal development for the growth of embryo-derived blood vessels in the labyrinth layer of the placenta. Also plays an essential role in developmental and stress-induced erythropoiesis, through regulation of EPO gene expression. Phosphorylates S100A9 at 'Thr-113'. In Canis lupus familiaris (Dog), this protein is Mitogen-activated protein kinase 14.